We begin with the raw amino-acid sequence, 216 residues long: Protein Syd (216 aa).

It belongs to the Syd family.

It is found in the cell inner membrane. Functionally, interacts with the SecY protein in vivo. May bind preferentially to an uncomplexed state of SecY, thus functioning either as a chelating agent for excess SecY in the cell or as a regulatory factor that negatively controls the translocase function. This is Protein Syd from Shewanella baltica (strain OS185).